A 225-amino-acid polypeptide reads, in one-letter code: Octanoyltransferase (225 aa).

The region spanning 43 to 225 is the BPL/LPL catalytic domain; that stretch reads GTAPELVWLL…KTFRDVFGRG (183 aa). Residues 82 to 89, 157 to 159, and 170 to 172 contribute to the substrate site; these read RGGQYTYH, AIG, and GVS. Catalysis depends on C188, which acts as the Acyl-thioester intermediate.

The protein belongs to the LipB family.

The protein resides in the cytoplasm. It carries out the reaction octanoyl-[ACP] + L-lysyl-[protein] = N(6)-octanoyl-L-lysyl-[protein] + holo-[ACP] + H(+). Its pathway is protein modification; protein lipoylation via endogenous pathway; protein N(6)-(lipoyl)lysine from octanoyl-[acyl-carrier-protein]: step 1/2. Its function is as follows. Catalyzes the transfer of endogenously produced octanoic acid from octanoyl-acyl-carrier-protein onto the lipoyl domains of lipoate-dependent enzymes. Lipoyl-ACP can also act as a substrate although octanoyl-ACP is likely to be the physiological substrate. The polypeptide is Octanoyltransferase (Parvibaculum lavamentivorans (strain DS-1 / DSM 13023 / NCIMB 13966)).